Consider the following 248-residue polypeptide: NADP-dependent 3-hydroxy acid dehydrogenase YdfG (248 aa).

Residues 7–12, 32–33, 54–55, and asparagine 81 each bind NADP(+); these read GATAGF, RR, and DV. Serine 134 provides a ligand contact to substrate. NADP(+) contacts are provided by residues tyrosine 147, lysine 151, and 177-185; that span reads PGLVGGTEF. Catalysis depends on tyrosine 147, which acts as the Proton acceptor.

This sequence belongs to the short-chain dehydrogenases/reductases (SDR) family. As to quaternary structure, homotetramer.

The enzyme catalyses 3-hydroxypropanoate + NADP(+) = 3-oxopropanoate + NADPH + H(+). It carries out the reaction L-allo-threonine + NADP(+) = aminoacetone + CO2 + NADPH. Functionally, NADP-dependent dehydrogenase with broad substrate specificity acting on 3-hydroxy acids. Catalyzes the NADP-dependent oxidation of L-allo-threonine to L-2-amino-3-keto-butyrate, which is spontaneously decarboxylated into aminoacetone. Also acts on D-threonine, L-serine, D-serine, D-3-hydroxyisobutyrate, L-3-hydroxyisobutyrate, D-glycerate and L-glycerate. Able to catalyze the reduction of the malonic semialdehyde to 3-hydroxypropionic acid. YdfG is apparently supplementing RutE, the presumed malonic semialdehyde reductase involved in pyrimidine degradation since both are able to detoxify malonic semialdehyde. This is NADP-dependent 3-hydroxy acid dehydrogenase YdfG from Salmonella typhi.